A 24-amino-acid polypeptide reads, in one-letter code: M-ectatotoxin-Eb2b (24 aa).

As to expression, expressed by the venom gland.

It localises to the secreted. Antimicrobial peptide active against Gram-negative bacterium E.coli MH1 (MIC=2.5 uM) and P.aeruginosa PAO1 (MIC=10 uM) and against Gram-positive bacterium A.globiformis VKM Ac-1112 (MIC=0.6 uM). The sequence is that of M-ectatotoxin-Eb2b from Ectatomma brunneum (Ant).